A 129-amino-acid chain; its full sequence is Fluoride-specific ion channel FluC (129 aa).

Helical transmembrane passes span 10-30 (LLVGAGGFLGTVARYLVALAF), 35-55 (PGFPFATFSVNIAGSFLIGFL), 71-91 (LFLVTGFCGGFTTFSSYMFEG), and 105-125 (LYLAGSIVGGFVALYTGIIAA). 2 residues coordinate Na(+): Gly-79 and Thr-82.

The protein belongs to the fluoride channel Fluc/FEX (TC 1.A.43) family.

The protein localises to the cell inner membrane. The enzyme catalyses fluoride(in) = fluoride(out). With respect to regulation, na(+) is not transported, but it plays an essential structural role and its presence is essential for fluoride channel function. Functionally, fluoride-specific ion channel. Important for reducing fluoride concentration in the cell, thus reducing its toxicity. This is Fluoride-specific ion channel FluC from Chlorobium luteolum (strain DSM 273 / BCRC 81028 / 2530) (Pelodictyon luteolum).